The following is a 660-amino-acid chain: Bifunctional polymyxin resistance protein ArnA (660 aa).

The tract at residues 1 to 304 (MKTVVFAYHD…TLGLVQGSRL (304 aa)) is formyltransferase ArnAFT. Position 86-88 (86-88 (HLI)) interacts with (6R)-10-formyltetrahydrofolate. The active-site Proton donor; for formyltransferase activity is His-104. Residues Arg-114 and 136 to 140 (VKRAD) each bind (6R)-10-formyltetrahydrofolate. The tract at residues 314–660 (RRTRVLILGV…RTVDLTDKPS (347 aa)) is dehydrogenase ArnADH. NAD(+) contacts are provided by residues Asp-347 and 368–369 (DI). UDP-alpha-D-glucuronate is bound by residues Ala-393, Tyr-398, and 432–433 (TS). The Proton acceptor; for decarboxylase activity role is filled by Glu-434. Residues Arg-460, Asn-492, 526-535 (KLIDGGKQKR), and Tyr-613 each bind UDP-alpha-D-glucuronate. Arg-619 acts as the Proton donor; for decarboxylase activity in catalysis.

In the N-terminal section; belongs to the Fmt family. UDP-L-Ara4N formyltransferase subfamily. This sequence in the C-terminal section; belongs to the NAD(P)-dependent epimerase/dehydratase family. UDP-glucuronic acid decarboxylase subfamily. As to quaternary structure, homohexamer, formed by a dimer of trimers.

The catalysed reaction is UDP-alpha-D-glucuronate + NAD(+) = UDP-beta-L-threo-pentopyranos-4-ulose + CO2 + NADH. It catalyses the reaction UDP-4-amino-4-deoxy-beta-L-arabinose + (6R)-10-formyltetrahydrofolate = UDP-4-deoxy-4-formamido-beta-L-arabinose + (6S)-5,6,7,8-tetrahydrofolate + H(+). It functions in the pathway nucleotide-sugar biosynthesis; UDP-4-deoxy-4-formamido-beta-L-arabinose biosynthesis; UDP-4-deoxy-4-formamido-beta-L-arabinose from UDP-alpha-D-glucuronate: step 1/3. Its pathway is nucleotide-sugar biosynthesis; UDP-4-deoxy-4-formamido-beta-L-arabinose biosynthesis; UDP-4-deoxy-4-formamido-beta-L-arabinose from UDP-alpha-D-glucuronate: step 3/3. The protein operates within bacterial outer membrane biogenesis; lipopolysaccharide biosynthesis. Bifunctional enzyme that catalyzes the oxidative decarboxylation of UDP-glucuronic acid (UDP-GlcUA) to UDP-4-keto-arabinose (UDP-Ara4O) and the addition of a formyl group to UDP-4-amino-4-deoxy-L-arabinose (UDP-L-Ara4N) to form UDP-L-4-formamido-arabinose (UDP-L-Ara4FN). The modified arabinose is attached to lipid A and is required for resistance to polymyxin and cationic antimicrobial peptides. The polypeptide is Bifunctional polymyxin resistance protein ArnA (Shigella boydii serotype 4 (strain Sb227)).